The following is a 185-amino-acid chain: Large ribosomal subunit protein uL5 (185 aa).

Belongs to the universal ribosomal protein uL5 family. In terms of assembly, part of the 50S ribosomal subunit; part of the 5S rRNA/L5/L18/L25 subcomplex. Contacts the 5S rRNA and the P site tRNA. Forms a bridge to the 30S subunit in the 70S ribosome.

In terms of biological role, this is one of the proteins that bind and probably mediate the attachment of the 5S RNA into the large ribosomal subunit, where it forms part of the central protuberance. In the 70S ribosome it contacts protein S13 of the 30S subunit (bridge B1b), connecting the 2 subunits; this bridge is implicated in subunit movement. Contacts the P site tRNA; the 5S rRNA and some of its associated proteins might help stabilize positioning of ribosome-bound tRNAs. The chain is Large ribosomal subunit protein uL5 from Bradyrhizobium sp. (strain ORS 278).